A 200-amino-acid polypeptide reads, in one-letter code: MSDIPLIDLKADPFALFAAWVSDAEKSEPNDPNAMAVATATPDGRPSVRMLLLKGVDERGFVFYTNLESRKGRELLANPHVALLFHWKSLRRQIRIEGPVEAVSAAEADAYFASRSRMSRLGAIASDQSRPLDDRSTFEERLKAVDEKYGDGPIPRPANWSGFRVLPEAIEFWQDRPYRLHDRAVWTRDGNGWNVTRLYP.

Residues Arg49 to Lys54, Tyr64 to Thr65, Arg70, Lys71, and Gln93 contribute to the FMN site. A substrate-binding site is contributed by Lys54. 3 residues coordinate substrate: Tyr111, Arg115, and Ser119. Residues Gln128–Ser129 and Trp173 each bind FMN. Arg179–His181 provides a ligand contact to substrate. FMN is bound at residue Arg183.

It belongs to the pyridoxamine 5'-phosphate oxidase family. As to quaternary structure, homodimer. FMN serves as cofactor.

The enzyme catalyses pyridoxamine 5'-phosphate + O2 + H2O = pyridoxal 5'-phosphate + H2O2 + NH4(+). It carries out the reaction pyridoxine 5'-phosphate + O2 = pyridoxal 5'-phosphate + H2O2. It functions in the pathway cofactor metabolism; pyridoxal 5'-phosphate salvage; pyridoxal 5'-phosphate from pyridoxamine 5'-phosphate: step 1/1. Its pathway is cofactor metabolism; pyridoxal 5'-phosphate salvage; pyridoxal 5'-phosphate from pyridoxine 5'-phosphate: step 1/1. Catalyzes the oxidation of either pyridoxine 5'-phosphate (PNP) or pyridoxamine 5'-phosphate (PMP) into pyridoxal 5'-phosphate (PLP). This is Pyridoxine/pyridoxamine 5'-phosphate oxidase from Gluconobacter oxydans (strain 621H) (Gluconobacter suboxydans).